Here is a 678-residue protein sequence, read N- to C-terminus: DNA ligase (678 aa).

Residues 47-51, 96-97, and Glu-122 contribute to the NAD(+) site; these read DSDYD and SL. Lys-124 (N6-AMP-lysine intermediate) is an active-site residue. Positions 145, 182, 300, and 324 each coordinate NAD(+). Cys-418, Cys-421, Cys-436, and Cys-442 together coordinate Zn(2+). The region spanning 602–678 is the BRCT domain; the sequence is AYNESFTGKT…ILEDNLKDLL (77 aa).

Belongs to the NAD-dependent DNA ligase family. LigA subfamily. It depends on Mg(2+) as a cofactor. Mn(2+) is required as a cofactor.

The catalysed reaction is NAD(+) + (deoxyribonucleotide)n-3'-hydroxyl + 5'-phospho-(deoxyribonucleotide)m = (deoxyribonucleotide)n+m + AMP + beta-nicotinamide D-nucleotide.. Its function is as follows. DNA ligase that catalyzes the formation of phosphodiester linkages between 5'-phosphoryl and 3'-hydroxyl groups in double-stranded DNA using NAD as a coenzyme and as the energy source for the reaction. It is essential for DNA replication and repair of damaged DNA. This Francisella tularensis subsp. holarctica (strain LVS) protein is DNA ligase.